A 186-amino-acid chain; its full sequence is Iodotyrosine deiodinase (186 aa).

FMN-binding positions include 11–15 (RKTVR), 38–39 (PS), and S39. 3-iodo-L-tyrosine-binding residues include M41, E68, Y72, and K92. L-tyrosine is bound by residues M41, E68, Y72, and K92. R176 lines the FMN pocket.

It belongs to the nitroreductase family. Homodimer. FMN is required as a cofactor.

It carries out the reaction 2 iodide + L-tyrosine + 2 NADP(+) = 3,5-diiodo-L-tyrosine + 2 NADPH + H(+). The enzyme catalyses iodide + L-tyrosine + NADP(+) = 3-iodo-L-tyrosine + NADPH. The catalysed reaction is 3-iodo-L-tyrosine + iodide + NADP(+) = 3,5-diiodo-L-tyrosine + NADPH + H(+). It catalyses the reaction L-tyrosine + chloride + NADP(+) = 3-chloro-L-tyrosine + NADPH. It carries out the reaction bromide + L-tyrosine + NADP(+) = 3-bromo-L-tyrosine + NADPH. Its function is as follows. Catalyzes the dehalogenation of halotyrosines such as 3-bromo-L-tyrosine, 3-chloro-L-tyrosine, 3-iodo-L-tyrosine and 3,5-diiodo-L-tyrosine. Activity towards 2-iodophenol is weak. This chain is Iodotyrosine deiodinase, found in Thermotoga neapolitana (strain ATCC 49049 / DSM 4359 / NBRC 107923 / NS-E).